We begin with the raw amino-acid sequence, 378 residues long: Alpha-(1,3)-fucosyltransferase fut-5 (378 aa).

The Cytoplasmic segment spans residues 1-7; it reads MKHNTLR. Residues 8–28 traverse the membrane as a helical; Signal-anchor for type II membrane protein segment; sequence AVFQFSFFIGICTFIMIAGYS. At 29 to 378 the chain is on the lumenal side; sequence YQINYNQRMG…CDNSFATRFL (350 aa). Asparagine 44, asparagine 88, asparagine 105, asparagine 143, asparagine 171, and asparagine 307 each carry an N-linked (GlcNAc...) asparagine glycan.

The protein belongs to the glycosyltransferase 10 family. Ca(2+) is required as a cofactor. In terms of processing, N-glycosylated.

It is found in the golgi apparatus. The protein localises to the golgi stack membrane. It carries out the reaction a beta-D-galactosyl-(1-&gt;3)-N-acetyl-beta-D-glucosaminyl derivative + GDP-beta-L-fucose = a beta-D-galactosyl-(1-&gt;3)-[alpha-L-fucosyl-(1-&gt;4)]-N-acetyl-beta-D-glucosaminyl derivative + GDP + H(+). It participates in protein modification; protein glycosylation. Its activity is regulated as follows. Inhibited by Cu(2+) and Ni(2+), and to a lesser extent by EDTA, Mn(2+) and Mg(2+). Catalyzes the addition of fucose in alpha 1-3 linkage to GalNAc-beta-1-&gt;4-GlcNAc-beta-1-&gt;3-Gal-beta-1-&gt;4-Glc (LDNT)acceptor. Unlike fut-1, does not add fucose to Man-alpha-1-&gt;3-(Man-alpha-1-&gt;6)-Man-beta-1-&gt;4-GlcNAc-beta-1-&gt;4-GlcNAc-beta-1-Asn (M3), Man-alpha-1-&gt;3-(Man-alpha-1-&gt;6)-Man-beta-1-&gt;4-GlcNAc-beta-1-&gt;4-(Fuc-alpha-1-&gt;6)-GlcNAc-beta-1-Asn (M3F6) or GlcNAc-beta-1-&gt;2-Man-alpha-1-&gt;3-(GlcNAc-beta-1-&gt;2-Man-alpha-1-&gt;6)-Man-beta-1-4-GlcNAc-beta-1-&gt;4-(Fuc-alpha-1-&gt;6)-GlcNAc-beta-1-Asn (GnM3F6) acceptors. The sequence is that of Alpha-(1,3)-fucosyltransferase fut-5 from Caenorhabditis elegans.